Consider the following 441-residue polypeptide: Membrane-bound protease PH1510 (441 aa).

Residues Met1 to Ala20 form the signal peptide. Gly64–Ala67 serves as a coordination point for substrate. The active-site Nucleophile is Ser97. A substrate-binding site is contributed by Ala119 to Leu124. Lys138 serves as the catalytic Proton donor/acceptor. 4 consecutive transmembrane segments (helical) span residues Val239–Gly259, Ile271–Ile291, Phe307–Gly327, and Ile344–Val364.

Belongs to the peptidase S14 family. Homodimer.

Its subcellular location is the membrane. Inhibited by divalent metal cations, including Mg(2+), Mn(2+), Ca(2+) and Zn(2+). Mildly inhibited by 0.01 % SDS and 0.1% dodecyl-beta-D-maltoside. Activity is nearly abolished by 1 % SDS. Protease that cleaves its substrates preferentially near hydrophobic or aromatic amino acid residues. Can degrade casein and the stomatin homolog PH1511 (in vitro). The polypeptide is Membrane-bound protease PH1510 (Pyrococcus horikoshii (strain ATCC 700860 / DSM 12428 / JCM 9974 / NBRC 100139 / OT-3)).